Here is a 235-residue protein sequence, read N- to C-terminus: Transmembrane protein 182 (235 aa).

The signal sequence occupies residues 1–33; sequence MKLSIGIFFGGLFGALGILIYLVAFGSDYWLLA. The Extracellular portion of the chain corresponds to 34 to 122; it reads KEIEKCSENQ…SALVYRGFWN (89 aa). 3 N-linked (GlcNAc...) asparagine glycosylation sites follow: asparagine 48, asparagine 90, and asparagine 107. The chain crosses the membrane as a helical span at residues 123–143; the sequence is IFMLLGVVTAVIGGFLIICAA. Topologically, residues 144-155 are cytoplasmic; it reads PFTNHRIYKAGG. Residues 156-176 traverse the membrane as a helical segment; the sequence is GLFITSGILFALVVVMHVFWV. At 177–205 the chain is on the extracellular side; that stretch reads QSVSDIKGYTDTRQQDCSQFTVYVSFGWS. Residues 206-226 form a helical membrane-spanning segment; sequence FMLAPFGIFFCLFAGMLFLLV. The Cytoplasmic portion of the chain corresponds to 227–235; that stretch reads GHTIHVHTK.

Belongs to the TMEM182 family.

It localises to the cell membrane. May negatively regulate myogenesis and skeletal muscle regeneration. This is Transmembrane protein 182 (tmem182) from Xenopus tropicalis (Western clawed frog).